The primary structure comprises 740 residues: Inhibitor of nuclear factor kappa-B kinase subunit alpha (740 aa).

Residues 15-302 form the Protein kinase domain; that stretch reads WEMRERLGTG…LTLKQPRCFV (288 aa). ATP contacts are provided by residues 21–29 and K44; that span reads LGTGGFGNV. Phosphothreonine; by PKB/AKT1 is present on T23. Catalysis depends on D144, which acts as the Proton acceptor. S176 carries the phosphoserine; by MAP3K14 modification. S180 is subject to Phosphoserine. The leucine-zipper stretch occupies residues 455 to 476; that stretch reads LLRYNTNLTKMKNTLISASQQL. Positions 733–738 are NEMO-binding; it reads LDWSWL.

Belongs to the protein kinase superfamily. Ser/Thr protein kinase family. I-kappa-B kinase subfamily. Component of the I-kappa-B-kinase (IKK) core complex consisting of CHUK, IKBKB and IKBKG; probably four alpha/CHUK-beta/IKBKB dimers are associated with four gamma/IKBKG subunits. The IKK core complex seems to associate with regulatory or adapter proteins to form a IKK-signalosome holo-complex. The IKK complex associates with TERF2IP/RAP1, leading to promote IKK-mediated phosphorylation of RELA/p65. Part of a complex composed of NCOA2, NCOA3, CHUK/IKKA, IKBKB, IKBKG and CREBBP. Part of a 70-90 kDa complex at least consisting of CHUK/IKKA, IKBKB, NFKBIA, RELA, ELP1 and MAP3K14. Directly interacts with TRPC4AP. May interact with TRAF2. Interacts with NALP2. May interact with MAVS/IPS1. Interacts with ARRB1 and ARRB2. Interacts with NLRC5; prevents CHUK phosphorylation and kinase activity. Interacts with PIAS1; this interaction induces PIAS1 phosphorylation. Interacts with ZNF268 isoform 2; the interaction is further increased in a TNF-alpha-dependent manner. Interacts with IFIT5; the interaction synergizes the recruitment of IKK to MAP3K7 and enhances IKK phosphorylation. Interacts with LRRC14. Directly interacts with DDX3X after the physiological activation of the TLR7 and TLR8 pathways; this interaction enhances CHUK autophosphorylation. Post-translationally, ubiquitinated by TRIM56 via 'Lys-63'-linked ubiquitination, promoting activation of CHUK/IKKA. Phosphorylated by MAP3K14/NIK, AKT and to a lesser extent by MEKK1, and dephosphorylated by PP2A. Autophosphorylated.

It is found in the cytoplasm. It localises to the nucleus. It catalyses the reaction L-seryl-[I-kappa-B protein] + ATP = O-phospho-L-seryl-[I-kappa-B protein] + ADP + H(+). With respect to regulation, activated when phosphorylated and inactivated when dephosphorylated. Functionally, serine kinase that plays an essential role in the NF-kappa-B signaling pathway which is activated by multiple stimuli such as inflammatory cytokines, bacterial or viral products, DNA damages or other cellular stresses. Acts as a part of the canonical IKK complex in the conventional pathway of NF-kappa-B activation and phosphorylates inhibitors of NF-kappa-B on serine residues. These modifications allow polyubiquitination of the inhibitors and subsequent degradation by the proteasome. In turn, free NF-kappa-B is translocated into the nucleus and activates the transcription of hundreds of genes involved in immune response, growth control, or protection against apoptosis. Negatively regulates the pathway by phosphorylating the scaffold protein TAXBP1 and thus promoting the assembly of the A20/TNFAIP3 ubiquitin-editing complex (composed of A20/TNFAIP3, TAX1BP1, and the E3 ligases ITCH and RNF11). Therefore, CHUK plays a key role in the negative feedback of NF-kappa-B canonical signaling to limit inflammatory gene activation. As part of the non-canonical pathway of NF-kappa-B activation, the MAP3K14-activated CHUK/IKKA homodimer phosphorylates NFKB2/p100 associated with RelB, inducing its proteolytic processing to NFKB2/p52 and the formation of NF-kappa-B RelB-p52 complexes. In turn, these complexes regulate genes encoding molecules involved in B-cell survival and lymphoid organogenesis. Also participates in the negative feedback of the non-canonical NF-kappa-B signaling pathway by phosphorylating and destabilizing MAP3K14/NIK. Within the nucleus, phosphorylates CREBBP and consequently increases both its transcriptional and histone acetyltransferase activities. Modulates chromatin accessibility at NF-kappa-B-responsive promoters by phosphorylating histones H3 at 'Ser-10' that are subsequently acetylated at 'Lys-14' by CREBBP. Additionally, phosphorylates the CREBBP-interacting protein NCOA3. Also phosphorylates FOXO3 and may regulate this pro-apoptotic transcription factor. Interacts with SASH1. Phosphorylates RIPK1 at 'Ser-25' which represses its kinase activity and consequently prevents TNF-mediated RIPK1-dependent cell death. Phosphorylates AMBRA1 following mitophagy induction, promoting AMBRA1 interaction with ATG8 family proteins and its mitophagic activity. This chain is Inhibitor of nuclear factor kappa-B kinase subunit alpha (CHUK), found in Bos taurus (Bovine).